The sequence spans 337 residues: C5a anaphylatoxin chemotactic receptor 2 (337 aa).

Topologically, residues 1 to 38 (MGNDSVSYEYGDYSDLSDRPVDCLDGACLAIDPLRVAP) are extracellular. Asn3 carries N-linked (GlcNAc...) asparagine glycosylation. The helical transmembrane segment at 39 to 61 (LPLYAAIFLVGVPGNAMVAWVAG) threads the bilayer. The Cytoplasmic portion of the chain corresponds to 62–72 (KVARRRVGATW). Residues 73–95 (LLHLAVADLLCCLSLPILAVPIA) form a helical membrane-spanning segment. Residues 96 to 114 (RGGHWPYGAVGCRALPSII) lie on the Extracellular side of the membrane. An intrachain disulfide couples Cys107 to Cys186. The chain crosses the membrane as a helical span at residues 115–137 (LLTMYASVLLLAALSADLCFLAL). Topologically, residues 138–149 (GPAWWSTVQRAC) are cytoplasmic. Residues 150 to 172 (GVQVACGAAWTLALLLTVPSAIY) form a helical membrane-spanning segment. The Extracellular segment spans residues 173–202 (RRLHQEHFPARLQCVVDYGGSSSTENAVTA). The chain crosses the membrane as a helical span at residues 203-225 (IRFLFGFLGPLVAVASCHSALLC). The Cytoplasmic segment spans residues 226 to 237 (WAARRCRPLGTA). A helical transmembrane segment spans residues 238–260 (IVVGFFVCWAPYHLLGLVLTVAA). At 261–274 (PNSALLARALRAEP) the chain is on the extracellular side. Residues 275-294 (LIVGLALAHSCLNPMLFLYF) traverse the membrane as a helical segment. Residues 295-337 (GRAQLRRSLPAACHWALRESQGQDESVDSKKSTSHDLVSEMEV) are Cytoplasmic-facing. Residue Ser320 is modified to Phosphoserine.

The protein belongs to the G-protein coupled receptor 1 family. In terms of assembly, interacts with C3 (the anaphylatoxin peptide C3a and the adipogenic hormone ASP); the interaction occurs with higher affinity for ASP, enhancing the phosphorylation and activation of GPR77, recruitment of ARRB2 to the cell surface and endocytosis of GRP77. In terms of tissue distribution, frontal cortex, hippocampus, hypothalamus, pons and liver.

The protein resides in the cell membrane. In terms of biological role, receptor for the chemotactic and inflammatory C3a, C4a and C5a anaphylatoxin peptides and also for their dearginated forms ASP/C3adesArg, C4adesArg and C5adesArg respectively. Couples weakly to G(i)-mediated signaling pathways. This chain is C5a anaphylatoxin chemotactic receptor 2 (C5AR2), found in Homo sapiens (Human).